Reading from the N-terminus, the 168-residue chain is Photosystem I assembly protein Ycf3 (168 aa).

TPR repeat units lie at residues 35 to 68 (AFTY…EIDP), 72 to 105 (SYIL…NPFL), and 120 to 153 (GEQA…TPGN).

This sequence belongs to the Ycf3 family.

The protein resides in the plastid. Its subcellular location is the chloroplast thylakoid membrane. Functionally, essential for the assembly of the photosystem I (PSI) complex. May act as a chaperone-like factor to guide the assembly of the PSI subunits. This is Photosystem I assembly protein Ycf3 from Calycanthus floridus var. glaucus (Eastern sweetshrub).